The primary structure comprises 303 residues: HTH-type transcriptional regulator CatM (303 aa).

The HTH lysR-type domain maps to 1–58; that stretch reads MELRHLRYFVTVVEEQSISKAAEKLCIAQPPLSRQIQKLEEELGIQLFERGFRPAKVT. The segment at residues 18–37 is a DNA-binding region (H-T-H motif); the sequence is ISKAAEKLCIAQPPLSRQIQ. Serine 99 and threonine 128 together coordinate cis,cis-muconate.

This sequence belongs to the LysR transcriptional regulatory family. As to quaternary structure, homotetramer in solution.

Positively regulates the expression of catA, catBCIJFD and benPK in response to cis,cis-muconate. It binds to the catB-catM intercistronic region, to a specific sequence upstream of catA and to the benPK promoter region. Can also repress pca genes. In Acinetobacter baylyi (strain ATCC 33305 / BD413 / ADP1), this protein is HTH-type transcriptional regulator CatM (catM).